Consider the following 932-residue polypeptide: UPF0182 protein Dred_1797 (932 aa).

7 consecutive transmembrane segments (helical) span residues 11-31 (LVIL…GLYI), 53-73 (IGLR…NLML), 118-138 (LTLA…SSVA), 180-200 (ILAS…LVTD), 209-229 (IFRF…FFVI), 264-284 (YKAL…NIFL), and 292-312 (YAIG…PAII). Residues 861 to 883 (DRPQQGVPPATDQPAGQQPAPEK) are disordered.

It belongs to the UPF0182 family.

Its subcellular location is the cell membrane. The chain is UPF0182 protein Dred_1797 from Desulforamulus reducens (strain ATCC BAA-1160 / DSM 100696 / MI-1) (Desulfotomaculum reducens).